The chain runs to 283 residues: 4-diphosphocytidyl-2-C-methyl-D-erythritol kinase (283 aa).

K10 is an active-site residue. 94 to 104 (PVAAGLAGGSS) provides a ligand contact to ATP. The active site involves D136.

It belongs to the GHMP kinase family. IspE subfamily.

It catalyses the reaction 4-CDP-2-C-methyl-D-erythritol + ATP = 4-CDP-2-C-methyl-D-erythritol 2-phosphate + ADP + H(+). It participates in isoprenoid biosynthesis; isopentenyl diphosphate biosynthesis via DXP pathway; isopentenyl diphosphate from 1-deoxy-D-xylulose 5-phosphate: step 3/6. Functionally, catalyzes the phosphorylation of the position 2 hydroxy group of 4-diphosphocytidyl-2C-methyl-D-erythritol. The protein is 4-diphosphocytidyl-2-C-methyl-D-erythritol kinase of Enterococcus faecalis (strain ATCC 700802 / V583).